Here is a 162-residue protein sequence, read N- to C-terminus: Beta-lactoglobulin-1 (162 aa).

2 cysteine pairs are disulfide-bonded: Cys-66–Cys-160 and Cys-106–Cys-119.

Belongs to the calycin superfamily. Lipocalin family. In terms of assembly, monomer. As to expression, synthesized in mammary gland and secreted in milk.

Its subcellular location is the secreted. Primary component of whey, it binds retinol and is probably involved in the transport of that molecule. The sequence is that of Beta-lactoglobulin-1 (LGB1) from Equus asinus (Donkey).